We begin with the raw amino-acid sequence, 129 residues long: Small ribosomal subunit protein uS11 (129 aa).

The protein belongs to the universal ribosomal protein uS11 family. In terms of assembly, part of the 30S ribosomal subunit. Interacts with proteins S7 and S18. Binds to IF-3.

Functionally, located on the platform of the 30S subunit, it bridges several disparate RNA helices of the 16S rRNA. Forms part of the Shine-Dalgarno cleft in the 70S ribosome. This is Small ribosomal subunit protein uS11 from Azotobacter vinelandii (strain DJ / ATCC BAA-1303).